The following is a 545-amino-acid chain: Methionine--tRNA ligase (545 aa).

The 'HIGH' region signature appears at 13 to 23 (PYANGEIHLGH). 4 residues coordinate Zn(2+): Cys-144, Cys-147, Cys-157, and Cys-160. The short motif at 329–333 (KMSKS) is the 'KMSKS' region element. ATP is bound at residue Lys-332.

This sequence belongs to the class-I aminoacyl-tRNA synthetase family. MetG type 1 subfamily. Monomer. Requires Zn(2+) as cofactor.

It localises to the cytoplasm. It carries out the reaction tRNA(Met) + L-methionine + ATP = L-methionyl-tRNA(Met) + AMP + diphosphate. Functionally, is required not only for elongation of protein synthesis but also for the initiation of all mRNA translation through initiator tRNA(fMet) aminoacylation. The polypeptide is Methionine--tRNA ligase (Vesicomyosocius okutanii subsp. Calyptogena okutanii (strain HA)).